The primary structure comprises 199 residues: Desiccation stress protein DSP-22, chloroplastic (199 aa).

The transit peptide at 1–52 (MASSTCYATIPAMSCRGQSTITRFGPNNLFLGKQSYELPLMRRNAKFTVRSM) directs the protein to the chloroplast. The span at 53–62 (REDNEKEEQQ) shows a compositional bias: basic and acidic residues. Positions 53 to 82 (REDNEKEEQQQQKQQQTHDGGPDLTPNRTE) are disordered. Transmembrane regions (helical) follow at residues 130-152 (FNGG…LIPI) and 172-191 (IWNG…TEYV).

This sequence belongs to the ELIP/psbS family. As to expression, preferentially localized in the chloroplast-rich palisade parenchyma cells, in extracts of desiccated leaves, in seeds, but not in roots or untreated leaves.

The protein resides in the plastid. Its subcellular location is the chloroplast thylakoid membrane. Possibly exerts a protective role during water loss. The sequence is that of Desiccation stress protein DSP-22, chloroplastic (DSP-22) from Craterostigma plantagineum (Blue gem).